The sequence spans 64 residues: U9-ctenitoxin-Pr1a (64 aa).

Disulfide bonds link Cys3–Cys15, Cys9–Cys24, Cys14–Cys47, Cys34–Cys55, and Cys49–Cys61.

Expressed by the venom gland.

It localises to the secreted. Non-toxic to mice and insects. The protein is U9-ctenitoxin-Pr1a of Phoneutria reidyi (Brazilian Amazonian armed spider).